The chain runs to 51 residues: Cytoplasmic FMR1-interacting protein 1 (51 aa).

Belongs to the CYFIP family. As to quaternary structure, component of the WAVE1 complex composed of ABI2, CYFIP1 or CYFIP2, BRK1, NCKAP1 and WASF1/WAVE1. Within the complex, a heterodimer containing NCKAP1 and CYFIP1 interacts with a heterotrimer formed by WAVE1, ABI2 and BRK1. Component of the CYFIP1-EIF4E-FMR1 complex which is composed of CYFIP, EIF4E and FMR1. Interacts with FMR1 but does not bind to related proteins FXR1 or FXR2. Interaction with EIF4E stimulates FMR1 binding. Component of the WAVE2 complex composed of ABI1, CYFIP1/SRA1, NCKAP1/NAP1 (NCKAP1l/HEM1 in hematopoietic cells) and WASF2/WAVE2. Interacts with the active GTP-bound form of RAC1. Interacts through its C-terminus with the C-terminus of DPYSL2/CRMP2 which is necessary for DPYSL2-induced axon outgrowth. Interacts with NYAP1, NYAP2 and MYO16. Interacts with TMEM108 (via N-terminus); the interaction associates TMEM108 with the WAVE1 complex.

It localises to the cytoplasm. Its subcellular location is the perinuclear region. The protein localises to the cell projection. The protein resides in the lamellipodium. It is found in the ruffle. It localises to the synapse. Its subcellular location is the synaptosome. In terms of biological role, component of the CYFIP1-EIF4E-FMR1 complex which binds to the mRNA cap and mediates translational repression. In the CYFIP1-EIF4E-FMR1 complex this subunit is an adapter between EIF4E and FMR1. Promotes the translation repression activity of FMR1 in brain probably by mediating its association with EIF4E and mRNA. Regulates formation of membrane ruffles and lamellipodia. Plays a role in axon outgrowth. Binds to F-actin but not to RNA. Part of the WAVE complex that regulates actin filament reorganization via its interaction with the Arp2/3 complex. Actin remodeling activity is regulated by RAC1. Regulator of epithelial morphogenesis. As component of the WAVE1 complex, required for BDNF-NTRK2 endocytic trafficking and signaling from early endosomes. The protein is Cytoplasmic FMR1-interacting protein 1 of Bos taurus (Bovine).